We begin with the raw amino-acid sequence, 371 residues long: Aspartate-semialdehyde dehydrogenase (371 aa).

Residues 11–14 (RGMV), 38–39 (TS), and Gln-75 each bind NADP(+). A phosphate-binding site is contributed by Arg-104. Residue Cys-137 is the Acyl-thioester intermediate of the active site. Residue Gln-164 coordinates substrate. 167–168 (SG) lines the NADP(+) pocket. Residue Glu-243 participates in substrate binding. Lys-246 lines the phosphate pocket. Residue Arg-269 coordinates substrate. His-276 (proton acceptor) is an active-site residue. Gln-352 provides a ligand contact to NADP(+).

Belongs to the aspartate-semialdehyde dehydrogenase family. As to quaternary structure, homodimer.

The enzyme catalyses L-aspartate 4-semialdehyde + phosphate + NADP(+) = 4-phospho-L-aspartate + NADPH + H(+). The protein operates within amino-acid biosynthesis; L-lysine biosynthesis via DAP pathway; (S)-tetrahydrodipicolinate from L-aspartate: step 2/4. It functions in the pathway amino-acid biosynthesis; L-methionine biosynthesis via de novo pathway; L-homoserine from L-aspartate: step 2/3. It participates in amino-acid biosynthesis; L-threonine biosynthesis; L-threonine from L-aspartate: step 2/5. In terms of biological role, catalyzes the NADPH-dependent formation of L-aspartate-semialdehyde (L-ASA) by the reductive dephosphorylation of L-aspartyl-4-phosphate. The polypeptide is Aspartate-semialdehyde dehydrogenase (Buchnera aphidicola subsp. Acyrthosiphon pisum (strain APS) (Acyrthosiphon pisum symbiotic bacterium)).